Reading from the N-terminus, the 200-residue chain is HTH-type transcriptional regulator BetI (200 aa).

Residues 8 to 68 (DIRKPQLVQA…ETMREILRQL (61 aa)) enclose the HTH tetR-type domain. Residues 31-50 (SIALISKEAGVSTGIINHYF) constitute a DNA-binding region (H-T-H motif).

It functions in the pathway amine and polyamine biosynthesis; betaine biosynthesis via choline pathway [regulation]. Functionally, repressor involved in the biosynthesis of the osmoprotectant glycine betaine. It represses transcription of the choline transporter BetT and the genes of BetAB involved in the synthesis of glycine betaine. This is HTH-type transcriptional regulator BetI from Vibrio atlanticus (strain LGP32) (Vibrio splendidus (strain Mel32)).